Here is a 153-residue protein sequence, read N- to C-terminus: Aspartate carbamoyltransferase regulatory chain (153 aa).

Zn(2+)-binding residues include cysteine 109, cysteine 114, cysteine 138, and cysteine 141.

The protein belongs to the PyrI family. As to quaternary structure, contains catalytic and regulatory chains. The cofactor is Zn(2+).

Its function is as follows. Involved in allosteric regulation of aspartate carbamoyltransferase. This Enterobacter sp. (strain 638) protein is Aspartate carbamoyltransferase regulatory chain.